A 251-amino-acid chain; its full sequence is Hydroxyacylglutathione hydrolase (251 aa).

Zn(2+) is bound by residues His-53, His-55, Asp-57, His-58, His-110, Asp-127, and His-165.

It belongs to the metallo-beta-lactamase superfamily. Glyoxalase II family. In terms of assembly, monomer. Zn(2+) is required as a cofactor.

The enzyme catalyses an S-(2-hydroxyacyl)glutathione + H2O = a 2-hydroxy carboxylate + glutathione + H(+). The protein operates within secondary metabolite metabolism; methylglyoxal degradation; (R)-lactate from methylglyoxal: step 2/2. In terms of biological role, thiolesterase that catalyzes the hydrolysis of S-D-lactoyl-glutathione to form glutathione and D-lactic acid. This Yersinia pseudotuberculosis serotype IB (strain PB1/+) protein is Hydroxyacylglutathione hydrolase.